We begin with the raw amino-acid sequence, 754 residues long: 5-methyltetrahydropteroyltriglutamate--homocysteine methyltransferase (754 aa).

Residues 17-20 (RELK) and Lys-110 contribute to the 5-methyltetrahydropteroyltri-L-glutamate site. Residues 421–423 (IGS) and Glu-474 each bind L-homocysteine. L-methionine is bound by residues 421–423 (IGS) and Glu-474. Residues 505–506 (RC) and Trp-551 each bind 5-methyltetrahydropteroyltri-L-glutamate. L-homocysteine is bound at residue Asp-589. Residue Asp-589 participates in L-methionine binding. Glu-595 serves as a coordination point for 5-methyltetrahydropteroyltri-L-glutamate. Zn(2+) is bound by residues His-631, Cys-633, and Glu-655. His-684 acts as the Proton donor in catalysis. Cys-716 serves as a coordination point for Zn(2+).

This sequence belongs to the vitamin-B12 independent methionine synthase family. Requires Zn(2+) as cofactor.

The catalysed reaction is 5-methyltetrahydropteroyltri-L-glutamate + L-homocysteine = tetrahydropteroyltri-L-glutamate + L-methionine. The protein operates within amino-acid biosynthesis; L-methionine biosynthesis via de novo pathway; L-methionine from L-homocysteine (MetE route): step 1/1. Its function is as follows. Catalyzes the transfer of a methyl group from 5-methyltetrahydrofolate to homocysteine resulting in methionine formation. The sequence is that of 5-methyltetrahydropteroyltriglutamate--homocysteine methyltransferase from Synechococcus sp. (strain JA-2-3B'a(2-13)) (Cyanobacteria bacterium Yellowstone B-Prime).